The following is an 859-amino-acid chain: Collagen alpha-1(II) chain (859 aa).

The interval 1-607 (LQGLPGKDGE…LGQTEKGPDP (607 aa)) is disordered. 2 positions are modified to 4-hydroxyproline: P31 and P40. 3-hydroxyproline is present on P42. A 4-hydroxyproline mark is found at P43 and P46. Over residues 78–121 (ERGSPGAQGLQGPRGLPGTPGTDGPKGATGPAGPNGAQGPPGLQ) the composition is skewed to low complexity. Basic and acidic residues predominate over residues 136–147 (KGDRGDVGEKGP). Composition is skewed to low complexity over residues 204 to 220 (PAGF…PGAK) and 249 to 277 (PTGV…AGRV). Position 279 is a 3-hydroxyproline (P279). A compositionally biased stretch (pro residues) spans 279–292 (PPGPNGNPGPPGPP). Residues P280, P286, and P292 each carry the 4-hydroxyproline modification. A compositionally biased stretch (low complexity) spans 306–321 (DAGPPGRAGDPGLQGP). The segment covering 487–501 (RGDKGETGEAGERGL) has biased composition (basic and acidic residues). Positions 491–586 (GETGEAGERG…PGPPGPPGPP (96 aa)) are triple-helical region. Position 516 is a 3-hydroxyproline (P516). Positions 520 to 529 (SGDQGAAGPA) are enriched in low complexity. P553 bears the 4-hydroxyproline mark. P558 is subject to 3-hydroxyproline. P559 carries the 4-hydroxyproline modification. Residues 570-586 (PAGPPGNPGPPGPPGPP) are compositionally biased toward pro residues. P573 is modified (3-hydroxyproline). P574 and P577 each carry 4-hydroxyproline. P579 is subject to 3-hydroxyproline. 2 positions are modified to 4-hydroxyproline: P580 and P583. P585 carries the post-translational modification 3-hydroxyproline. Position 586 is a 4-hydroxyproline (P586). The segment at 587 to 613 (GTGIDMSAFAGLGQTEKGPDPIRYMRA) is nonhelical region (C-terminal). The propeptide at 614–859 (DEAAGGLRQH…GVDIGPVCFL (246 aa)) is C-terminal propeptide. The Fibrillar collagen NC1 domain maps to 625-859 (VEVDATLKSL…GVDIGPVCFL (235 aa)). 3 disulfide bridges follow: C655–C687, C695–C857, and C765–C810. Ca(2+) is bound by residues D673, N675, Q676, C678, and D681. N760 carries N-linked (GlcNAc...) asparagine glycosylation.

This sequence belongs to the fibrillar collagen family. Homotrimers of alpha 1(II) chains. Contains mostly 4-hydroxyproline. Prolines at the third position of the tripeptide repeating unit (G-X-P) are 4-hydroxylated in some or all of the chains. Post-translationally, contains 3-hydroxyproline at a few sites. This modification occurs on the first proline residue in the sequence motif Gly-Pro-Hyp, where Hyp is 4-hydroxyproline. In terms of processing, lysine residues at the third position of the tripeptide repeating unit (G-X-Y) are 5-hydroxylated in some or all of the chains. O-glycosylated on hydroxylated lysine residues. The O-linked glycan consists of a Glc-Gal disaccharide.

The protein resides in the secreted. It localises to the extracellular space. The protein localises to the extracellular matrix. Functionally, type II collagen is specific for cartilaginous tissues. It is essential for the normal embryonic development of the skeleton, for linear growth and for the ability of cartilage to resist compressive forces. This Gallus gallus (Chicken) protein is Collagen alpha-1(II) chain.